Consider the following 436-residue polypeptide: Homeobox protein PKNOX1 (436 aa).

The tract at residues 24 to 49 (LKTEQDPNCSEPDVEGVSPPPVGSQT) is disordered. Phosphoserine occurs at positions 33 and 41. In terms of domain architecture, MEIS N-terminal spans 80–163 (GSEGTTSASF…MNSETLLSGE (84 aa)). A DNA-binding region (homeobox; TALE-type) is located at residues 259 to 321 (SKNKRGVLPK…NARRRILQPM (63 aa)). The disordered stretch occupies residues 401-436 (AEQSEDDSVDSTGDGGAALAPGHLGGLVLENSDSLQ).

It belongs to the TALE/MEIS homeobox family. As to quaternary structure, interacts with MN1.

It is found in the nucleus. Its function is as follows. Activates transcription in the presence of PBX1A and HOXA1. The protein is Homeobox protein PKNOX1 of Bos taurus (Bovine).